The chain runs to 339 residues: Glycerol-3-phosphate dehydrogenase [NAD(P)+] (339 aa).

Residues Ser15, Tyr16, His36, and Lys110 each contribute to the NADPH site. Residues Lys110, Gly139, and Thr141 each contribute to the sn-glycerol 3-phosphate site. Ala143 contacts NADPH. Lys195, Asp248, Ser258, Arg259, and Asn260 together coordinate sn-glycerol 3-phosphate. Residue Lys195 is the Proton acceptor of the active site. Residue Arg259 coordinates NADPH. Positions 283 and 285 each coordinate NADPH.

It belongs to the NAD-dependent glycerol-3-phosphate dehydrogenase family.

The protein resides in the cytoplasm. It carries out the reaction sn-glycerol 3-phosphate + NAD(+) = dihydroxyacetone phosphate + NADH + H(+). It catalyses the reaction sn-glycerol 3-phosphate + NADP(+) = dihydroxyacetone phosphate + NADPH + H(+). It functions in the pathway membrane lipid metabolism; glycerophospholipid metabolism. Its function is as follows. Catalyzes the reduction of the glycolytic intermediate dihydroxyacetone phosphate (DHAP) to sn-glycerol 3-phosphate (G3P), the key precursor for phospholipid synthesis. The polypeptide is Glycerol-3-phosphate dehydrogenase [NAD(P)+] (Citrobacter koseri (strain ATCC BAA-895 / CDC 4225-83 / SGSC4696)).